A 289-amino-acid chain; its full sequence is 2-hydroxy-6-oxononadienedioate/2-hydroxy-6-oxononatrienedioate hydrolase (289 aa).

The AB hydrolase-1 domain occupies 39 to 275; that stretch reads TVVMLHGSGP…RCGHWAQWEH (237 aa). His-269 acts as the Proton acceptor in catalysis.

Belongs to the AB hydrolase superfamily. MhpC family. As to quaternary structure, homodimer.

The catalysed reaction is (2Z,4E)-2-hydroxy-6-oxonona-2,4-dienedioate + H2O = (2Z)-2-hydroxypenta-2,4-dienoate + succinate + H(+). The enzyme catalyses (2Z,4E,7E)-2-hydroxy-6-oxonona-2,4,7-trienedioate + H2O = (2Z)-2-hydroxypenta-2,4-dienoate + fumarate + H(+). It participates in aromatic compound metabolism; 3-phenylpropanoate degradation. Catalyzes the cleavage of the C5-C6 bond of 2-hydroxy-6-oxononadienedioate and 2-hydroxy-6-oxononatrienedioate, a dienol ring fission product of the bacterial meta-cleavage pathway for degradation of phenylpropionic acid. This is 2-hydroxy-6-oxononadienedioate/2-hydroxy-6-oxononatrienedioate hydrolase from Paraburkholderia xenovorans (strain LB400).